The sequence spans 1727 residues: DNA-directed RNA polymerase II subunit rpb1 (1727 aa).

Residues Cys66, Cys69, Cys76, His79, Cys106, Cys109, Cys147, and Cys175 each contribute to the Zn(2+) site. Mg(2+) is bound by residues Asp486, Asp488, and Asp490. A bridging helix region spans residues 819–831; that stretch reads PQEFFFHAMGGRE. A Glycyl lysine isopeptide (Lys-Gly) (interchain with G-Cter in ubiquitin) cross-link involves residue Lys1266. 2 disordered regions span residues 1478–1512 and 1551–1727; these read EPSN…YDAP and PTYS…NKKK. Over residues 1480-1505 the composition is skewed to polar residues; the sequence is SNVSYPDTPGSQTPSYSYGDGSTTPF. Tandem repeats lie at residues 1553-1559, 1560-1566, 1567-1573, 1574-1580, 1581-1587, 1588-1594, 1595-1601, 1602-1608, 1609-1615, 1616-1622, 1623-1629, 1630-1636, 1637-1643, 1644-1650, 1651-1657, 1658-1664, 1665-1671, 1672-1678, 1679-1685, 1686-1692, 1693-1699, 1700-1706, and 1707-1713. The C-terminal domain (CTD); 23 X 7 AA tandem repeats of Y-S-P-[ST]-S-P-[FST] stretch occupies residues 1553 to 1713; it reads YSPTSPSYSP…SPSYSPSSPT (161 aa).

Belongs to the RNA polymerase beta' chain family. In terms of assembly, component of the RNA polymerase II (Pol II) complex consisting of 12 subunits. Post-translationally, the tandem heptapeptide repeats in the C-terminal domain (CTD) can be highly phosphorylated. The phosphorylation activates Pol II. Phosphorylation occurs mainly at residues 'Ser-2' and 'Ser-5' of the heptapeptide repeat. The phosphorylation state is believed to result from the balanced action of site-specific CTD kinases and phosphatase, and a 'CTD code' that specifies the position of Pol II within the transcription cycle has been proposed. In terms of processing, following transcription stress, the elongating form of RNA polymerase II (RNA pol IIo) is polyubiquitinated via 'Lys-63'-linkages on Lys-1266 at DNA damage sites without leading to degradation: ubiquitination promotes RNA pol IIo backtracking to allow access by the transcription-coupled nucleotide excision repair (TC-NER) machinery. Subsequent DEF1-dependent polyubiquitination by the elongin complex via 'Lys-48'-linkages may lead to proteasome-mediated degradation; presumably at stalled RNA pol II where TC-NER has failed, to halt global transcription and enable 'last resort' DNA repair pathways.

It localises to the nucleus. The enzyme catalyses RNA(n) + a ribonucleoside 5'-triphosphate = RNA(n+1) + diphosphate. DNA-dependent RNA polymerase catalyzes the transcription of DNA into RNA using the four ribonucleoside triphosphates as substrates. Largest and catalytic component of RNA polymerase II which synthesizes mRNA precursors and many functional non-coding RNAs. Forms the polymerase active center together with the second largest subunit. Pol II is the central component of the basal RNA polymerase II transcription machinery. It is composed of mobile elements that move relative to each other. RPB1 is part of the core element with the central large cleft, the clamp element that moves to open and close the cleft and the jaws that are thought to grab the incoming DNA template. At the start of transcription, a single-stranded DNA template strand of the promoter is positioned within the central active site cleft of Pol II. A bridging helix emanates from RPB1 and crosses the cleft near the catalytic site and is thought to promote translocation of Pol II by acting as a ratchet that moves the RNA-DNA hybrid through the active site by switching from straight to bent conformations at each step of nucleotide addition. During transcription elongation, Pol II moves on the template as the transcript elongates. Elongation is influenced by the phosphorylation status of the C-terminal domain (CTD) of Pol II largest subunit (RPB1), which serves as a platform for assembly of factors that regulate transcription initiation, elongation, termination and mRNA processing. The polypeptide is DNA-directed RNA polymerase II subunit rpb1 (polr2a) (Dictyostelium discoideum (Social amoeba)).